A 490-amino-acid polypeptide reads, in one-letter code: Betaine aldehyde dehydrogenase (490 aa).

A K(+)-binding site is contributed by D93. Residue 150-152 (GAW) participates in NAD(+) binding. The active-site Charge relay system is the K162. 176–179 (KPSE) contacts NAD(+). Residue V180 participates in K(+) binding. Residue 230–233 (GIAS) participates in NAD(+) binding. A K(+)-binding site is contributed by L246. E252 (proton acceptor) is an active-site residue. NAD(+) contacts are provided by G254, C286, and E387. The active-site Nucleophile is C286. C286 carries the post-translational modification Cysteine sulfenic acid (-SOH). K(+) is bound by residues K457 and G460. The active-site Charge relay system is the E464.

This sequence belongs to the aldehyde dehydrogenase family. In terms of assembly, dimer of dimers. It depends on K(+) as a cofactor.

It carries out the reaction betaine aldehyde + NAD(+) + H2O = glycine betaine + NADH + 2 H(+). It functions in the pathway amine and polyamine biosynthesis; betaine biosynthesis via choline pathway; betaine from betaine aldehyde: step 1/1. Functionally, involved in the biosynthesis of the osmoprotectant glycine betaine. Catalyzes the irreversible oxidation of betaine aldehyde to the corresponding acid. This Pectobacterium carotovorum subsp. carotovorum (strain PC1) protein is Betaine aldehyde dehydrogenase.